Reading from the N-terminus, the 387-residue chain is Norsolorinic acid reductase stcV (387 aa).

Position 69 (aspartate 69) interacts with NADP(+). The active-site Proton donor is tyrosine 74. Histidine 148 lines the substrate pocket. NADP(+) is bound by residues 178–179, glutamine 204, 233–243, and 301–309; these read SD, GALGRGQYKSA, and RTVEQLEAN.

The protein belongs to the aldo/keto reductase family. Aldo/keto reductase 2 subfamily.

It functions in the pathway mycotoxin biosynthesis; sterigmatocystin biosynthesis. In terms of biological role, norsolorinic acid reductase; part of the gene cluster that mediates the biosynthesis of sterigmatocystin (ST), a polyketide-derived furanocoumarin which is part of the most toxic and carcinogenic compounds among the known mycotoxins. The first step in the biosynthesis of sterigmatocystin is the production of hexanoate by the fatty acid synthase (FAS) units stcJ and stcK. The polyketide backbone is assembled by the non-reducing polyketide synthase stcA by condensation of the starter hexanoyl-CoA and 7 malonyl-CoA extender units followed by cyclization and release of norsolorinic acid. Norsolorinic acid is the first stable intermediate in the biosynthesis of sterigmatocystin and is converted into averantin (AVN) by the ketoreductase stcE which reduces the hexanoate ketone to an alcohol. Averantin is then oxidized into 5'-hydroxyaverantin (HAVN) by the cytochrome P450 monooxygenase stcF. 5'-hydroxyaverantin is further converted to 5'-oxyaverantin (OAVN) by the 5'-hydroxyaverantin dehydrogenase stcG. The next step is the conversion of OAVN into averufin (AVF) which is catalyzed by a yet to be identified enzyme. The cytochrome P450 monooxygenase stcB and the flavin-binding monooxygenase stcW are both required for the conversion of averufin to 1-hydroxyversicolorone. The esterase stcI probably catalyzes the formation of versiconal hemiacetal acetate from 1-hydroxyversicolorone. The oxydoreductase stcN then probably catalyzes the biosynthetic step from versiconal to versicolorin B (VERB). The next step is performed by the versicolorin B desaturase stcL to produce versicolorin A (VERA). The ketoreductase stcU and the cytochrome P450 monooxygenase stcS are involved in the conversion of versicolorin A to demethylsterigmatocystin. The Baeyer-Villiger oxidas stcQ and the reductase stcR might be involved in the biosynthetic step from versicolorin A to demethylsterigmatocystin. The final step in the biosynthesis of sterigmatocystin is the methylation of demethylsterigmatocystin catalyzed by the methyltransferase stcP. The protein is Norsolorinic acid reductase stcV of Emericella nidulans (strain FGSC A4 / ATCC 38163 / CBS 112.46 / NRRL 194 / M139) (Aspergillus nidulans).